Reading from the N-terminus, the 417-residue chain is Peptidyl-Asp metalloendopeptidase (417 aa).

Residues 1-25 (MLSRSIGKAAGGLVLGLSVAAAAHA) form the signal peptide. Residue His-327 coordinates Zn(2+). The active site involves Glu-328. Positions 331 and 337 each coordinate Zn(2+).

It belongs to the peptidase M72 family. It depends on Zn(2+) as a cofactor.

The catalysed reaction is Cleavage of Xaa-|-Asp, Xaa-|-Glu and Xaa-|-cysteic acid bonds.. In terms of biological role, metalloprotease, specifically cleaves on the N-terminal side of aspartyl, glutamyl and cysteic acid residues. The polypeptide is Peptidyl-Asp metalloendopeptidase (Stenotrophomonas maltophilia (strain K279a)).